Reading from the N-terminus, the 246-residue chain is UDP-N-acetyl-D-mannosaminuronic acid transferase (246 aa).

The protein belongs to the glycosyltransferase 26 family.

The catalysed reaction is UDP-N-acetyl-alpha-D-mannosaminouronate + N-acetyl-alpha-D-glucosaminyl-di-trans,octa-cis-undecaprenyl diphosphate = beta-D-ManNAcA-(1-&gt;4)-alpha-D-GlcNAc-di-trans,octa-cis-undecaprenyl diphosphate + UDP + H(+). The protein operates within bacterial outer membrane biogenesis; enterobacterial common antigen biosynthesis. Functionally, catalyzes the synthesis of Und-PP-GlcNAc-ManNAcA (Lipid II), the second lipid-linked intermediate involved in enterobacterial common antigen (ECA) synthesis. This chain is UDP-N-acetyl-D-mannosaminuronic acid transferase, found in Salmonella agona (strain SL483).